The primary structure comprises 281 residues: Bifunctional protein FolD (281 aa).

NADP(+) is bound by residues 165 to 167 (GRG), threonine 192, and valine 233.

The protein belongs to the tetrahydrofolate dehydrogenase/cyclohydrolase family. Homodimer.

The catalysed reaction is (6R)-5,10-methylene-5,6,7,8-tetrahydrofolate + NADP(+) = (6R)-5,10-methenyltetrahydrofolate + NADPH. The enzyme catalyses (6R)-5,10-methenyltetrahydrofolate + H2O = (6R)-10-formyltetrahydrofolate + H(+). Its pathway is one-carbon metabolism; tetrahydrofolate interconversion. Its function is as follows. Catalyzes the oxidation of 5,10-methylenetetrahydrofolate to 5,10-methenyltetrahydrofolate and then the hydrolysis of 5,10-methenyltetrahydrofolate to 10-formyltetrahydrofolate. This is Bifunctional protein FolD from Corynebacterium diphtheriae (strain ATCC 700971 / NCTC 13129 / Biotype gravis).